A 530-amino-acid polypeptide reads, in one-letter code: G2/mitotic-specific cyclin-B (530 aa).

A disordered region spans residues 76–152 (ARVDSHWKKQ…EPTLKREDSN (77 aa)). Residues 121–144 (PTKTTVEPTKVTVKSSSSENVNEP) show a composition bias toward low complexity. The residue at position 137 (Ser-137) is a Phosphoserine.

It belongs to the cyclin family. Cyclin AB subfamily. In terms of assembly, interacts with the protein kinase Cdk1 to form a serine/threonine kinase holoenzyme complex also known as maturation promoting factor (MPF). The cyclin subunit imparts substrate specificity to the complex.

Functionally, essential for the control of the cell cycle at the G2/M (mitosis) transition. In Drosophila melanogaster (Fruit fly), this protein is G2/mitotic-specific cyclin-B (CycB).